The sequence spans 385 residues: Elsinochromes biosynthesis cluster protein HP2 (385 aa).

Positions 1 to 22 are cleaved as a signal peptide; that stretch reads MVLLYILIMVALIPMYMTVVQD. Transmembrane regions (helical) follow at residues 94–114 and 148–168; these read TVLS…SMFD and FYGQ…IVLW. N-linked (GlcNAc...) asparagine glycosylation occurs at N187. Residues 209–229 form a helical membrane-spanning segment; it reads SWTFGQIVPIVLLVSPLVAAF. N248 carries an N-linked (GlcNAc...) asparagine glycan. Helical transmembrane passes span 309-329 and 344-364; these read AILF…LPLA and YYAF…AVPF.

It localises to the membrane. Part of the gene cluster that mediates the biosynthesis of elsinochromes, pigments consisting of at least four interconvertible tautomers (A, B, C and D) that have a core phenolic quinone to which various side chains are attached and which play an important role in fungal pathogenesis. The non-reducing polyketide synthase PKS1 was proposed to iteratively catalyze decarboxylation between acetyl-CoA and malonyl-CoA subunits for polyketide chain elongation. The released polyketide undergoes cyclization to form an aromatic ring, and proceeds via serial modification steps to produce the heptaketide back- bone of elsinochrome. As elsinochrome has a symmetrical structure, two identical heptaketides are fused to form a core 1,2-dihydrobenzo-perylene ring structure, which can then be successively modified to produce the various derivatives of elsinochrome. Some of these reactions may be cooperatively carried out, at least in part, by the products of RDT1, OXR1 and PKS1. PRF1, embedded within the elsinochrome cluster possibly functions to stabilize some of the biosynthetic enzymes required for elsinochrome production. As prefoldin is a hexamer containing 2 a and 4 b subunits, additional prefoldin subunits, whose coding genes may not immediately link to the elsinochrome biosynthetic gene cluster, are required to fulfill the chaperone function. In addition, no methyltransferase-coding gene exists within the biosynthetic gene cluster, even though elsinochrome has four methyl groups at positions C3, C7, C8 and C12. Apparently, the identified gene cluster does not contain the entire entourage of genes responsible for elsinochrome biosynthesis. Once elsinochrome is synthesized, it must be exported outside the fungal cells, which is probably accomplished by the ECT1 transporter, to avoid toxicity. The chain is Elsinochromes biosynthesis cluster protein HP2 from Elsinoe fawcettii (Citrus scab fungus).